An 89-amino-acid chain; its full sequence is Small ribosomal subunit protein uS15 (89 aa).

This sequence belongs to the universal ribosomal protein uS15 family. As to quaternary structure, part of the 30S ribosomal subunit. Forms a bridge to the 50S subunit in the 70S ribosome, contacting the 23S rRNA.

One of the primary rRNA binding proteins, it binds directly to 16S rRNA where it helps nucleate assembly of the platform of the 30S subunit by binding and bridging several RNA helices of the 16S rRNA. Its function is as follows. Forms an intersubunit bridge (bridge B4) with the 23S rRNA of the 50S subunit in the ribosome. The chain is Small ribosomal subunit protein uS15 from Crocosphaera subtropica (strain ATCC 51142 / BH68) (Cyanothece sp. (strain ATCC 51142)).